Consider the following 1961-residue polypeptide: Ankyrin-3 (1961 aa).

Residues 1–10 (MSEEPKEKPA) are compositionally biased toward basic and acidic residues. Residues 1–25 (MSEEPKEKPAKPAHRKRKGKKSDAN) are disordered. Residues 11–20 (KPAHRKRKGK) are compositionally biased toward basic residues. Ser22 carries the phosphoserine modification. ANK repeat units lie at residues 56 to 85 (NGLNALHLASKEGHVEVVSELLQREANVDA), 89 to 118 (KGNTALHIASLAGQAEVVKVLVTNGANVNA), 122 to 151 (NGFTPLYMAAQENHLEVVRFLLDNGASQSL), 155 to 184 (DGFTPLAVALQQGHDQVVSLLLENDTKGKV), 186 to 213 (LPALHIAARKDDTKAAALLLQNDTNADV), 217 to 246 (SGFTPLHIAAHYGNINVATLLLNRAAAVDF), 250 to 279 (NDITPLHVASKRGNANMVKLLLDRGAKIDA), 283 to 312 (DGLTPLHCGARSGHEQVVEMLLDRSAPILS), 316 to 345 (NGLSPLHMATQGDHLNCVQLLLQHNVPVDD), 349 to 378 (DYLTALHVAAHCGHYKVAKVLLDKKASPNA), 382 to 411 (NGFTPLHIACKKNRIRVMELLLKHGASIQA), 415 to 444 (SGLTPIHVAAFMGHVNIVSQLMHHGASPNT), 448 to 477 (RGETALHMAARSGQAEVVRYLVQDGAQVEA), 481 to 510 (DDQTPLHISARLGKADIVQQLLQQGASPNA), 514 to 543 (SGYTPLHLAAREGHEDVAAFLLDHGASLSI), 547 to 576 (KGFTPLHVAAKYGKLEVASLLLQKSASPDA), 580 to 609 (SGLTPLHVAAHYDNQKVALLLLDQGASPHA), 613 to 642 (NGYTPLHIAAKKNQMDIATSLLEYGADANA), 646 to 675 (QGIASVHLAAQEGHVDMVSLLLSRNANVNL), 679 to 708 (SGLTPLHLAAQEDRVNVAEVLVNQGAHVDA), 712 to 741 (MGYTPLHVGCHYGNIKIVNFLLQHSAKVNA), 745 to 774 (NGYTALHQAAQQGHTHIINVLLQNNASPNE), and 778 to 807 (NGNTALAIARRLGYISVVDTLKVVTEEIMT). Ser606 carries the phosphoserine modification. Leu732 bears the Phosphoserine mark. Residues Ser830, Ser844, Ser850, Ser873, Ser914, Ser917, Ser923, Ser958, Ser960, and Ser1114 each carry the phosphoserine modification. 2 consecutive ZU5 domains span residues 985-1140 (FLVS…VVSR) and 1142-1289 (KQES…LADC). The tract at residues 1274 to 1408 (VSFTTNVSAR…SIKIRDTSQE (135 aa)) is UPA domain. 5 positions are modified to phosphoserine: Ser1451, Ser1462, Ser1470, Ser1473, and Gly1560. Positions 1478–1562 (TDIRMAIVAD…DIVTLLEGPI (85 aa)) constitute a Death domain. Disordered regions lie at residues 1606-1678 (PNPF…DPLD), 1698-1740 (SVPG…VTED), 1784-1818 (WQNETPSGSLESPAQARRLTGGLLDRLDDSSDQAR), 1844-1884 (PEAK…PVSP), and 1915-1961 (MTRT…KKTH). A compositionally biased stretch (basic and acidic residues) spans 1725 to 1740 (QQEKGKSGPDEEVTED). Polar residues predominate over residues 1784–1795 (WQNETPSGSLES). Ser1795, Ser1813, and Ser1883 each carry phosphoserine. Residues 1808–1818 (DRLDDSSDQAR) show a composition bias toward basic and acidic residues. Residues 1933–1961 (GSTRSEPKQGEGYKVKTKKEIRNVEKKTH) are compositionally biased toward basic and acidic residues.

In terms of assembly, may be a constituent of a NFASC/NRCAM/ankyrin G complex. Interacts with RHBG. Directly interacts with DMD and betaDAG1; this interaction does not interfere with DMD-binding and is required for DMD and betaDAG1 retention at costameres. Interacts (via N-terminal ANK repeats) with SCHIP1 isoform 7 (via C-terminus); this interaction is required for the localization at axon initial segments (AISs) and nodes of Ranvier (NRs). Interacts with PLEC and FLNC. Interacts with KCNA1; this inhibits channel activity. Interacts with SCN5A. Interacts with PKP2 and GJA1/CX43. As to expression, expressed in many epithelial tissues, muscles and axons. Expressed in kidney, brain, skin, lung, liver, intestine, pancreas, heart and testis (at protein level). In testis, expressed in Leydig cells, but very weakly or not at all in Sertoli cells or seminiferous tubules. Expressed in macrophages (at protein level).

Its subcellular location is the cytoplasm. It is found in the cytoskeleton. The protein localises to the cell projection. It localises to the axon. The protein resides in the cell membrane. Its subcellular location is the sarcolemma. It is found in the postsynaptic cell membrane. The protein localises to the lysosome. It localises to the T-tubule. Functionally, membrane-cytoskeleton linker. May participate in the maintenance/targeting of ion channels and cell adhesion molecules at the nodes of Ranvier and axonal initial segments. In skeletal muscle, required for costamere localization of DMD and betaDAG1. Regulates KCNA1 channel activity in function of dietary Mg(2+) levels, and thereby contributes to the regulation of renal Mg(2+) reabsorption. Required for intracellular adhesion and junctional conductance in myocytes, potentially via stabilization of GJA1/CX43 protein abundance and promotion of PKP2, GJA1/CX43, and SCN5A/Nav1.5 localization to cell-cell junctions. This Mus musculus (Mouse) protein is Ankyrin-3 (Ank3).